A 510-amino-acid chain; its full sequence is Amidophosphoribosyltransferase (510 aa).

The Nucleophile role is filled by Cys2. The 238-residue stretch at 2 to 239 folds into the Glutamine amidotransferase type-2 domain; that stretch reads CGILGIVLAN…PGEAVIIPKN (238 aa). Mg(2+) contacts are provided by Asp373 and Asp374.

It in the C-terminal section; belongs to the purine/pyrimidine phosphoribosyltransferase family. The cofactor is Mg(2+).

The catalysed reaction is 5-phospho-beta-D-ribosylamine + L-glutamate + diphosphate = 5-phospho-alpha-D-ribose 1-diphosphate + L-glutamine + H2O. It functions in the pathway purine metabolism; IMP biosynthesis via de novo pathway; N(1)-(5-phospho-D-ribosyl)glycinamide from 5-phospho-alpha-D-ribose 1-diphosphate: step 1/2. This chain is Amidophosphoribosyltransferase (ADE4), found in Saccharomyces cerevisiae (strain ATCC 204508 / S288c) (Baker's yeast).